Here is a 354-residue protein sequence, read N- to C-terminus: Caffeic acid 3-O-methyltransferase (354 aa).

121–127 (MNQDKVL) is a binding site for substrate. The substrate binding stretch occupies residues 153-171 (AFEYHGKDQRFNKVFNSGM). Residues Gly199, Asp222, Asp242, Met243, and Lys256 each coordinate S-adenosyl-L-methionine. His260 functions as the Proton acceptor in the catalytic mechanism.

The protein belongs to the class I-like SAM-binding methyltransferase superfamily. Cation-independent O-methyltransferase family. COMT subfamily. Homodimer.

The catalysed reaction is (E)-caffeate + S-adenosyl-L-methionine = (E)-ferulate + S-adenosyl-L-homocysteine + H(+). It functions in the pathway aromatic compound metabolism; phenylpropanoid biosynthesis. Functionally, catalyzes the conversion of caffeic acid to ferulic acid and of 5-hydroxyferulic acid to sinapic acid. The resulting products may subsequently be converted to the corresponding alcohols that are incorporated into lignins. The chain is Caffeic acid 3-O-methyltransferase from Zinnia elegans (Garden zinnia).